A 207-amino-acid chain; its full sequence is Small ribosomal subunit protein uS4A (207 aa).

The 66-residue stretch at 98–163 (TRLDNLVYRL…SPKFKELKEN (66 aa)) folds into the S4 RNA-binding domain.

It belongs to the universal ribosomal protein uS4 family. In terms of assembly, part of the 30S ribosomal subunit. Contacts protein S5. The interaction surface between S4 and S5 is involved in control of translational fidelity.

In terms of biological role, one of the primary rRNA binding proteins, it binds directly to 16S rRNA where it nucleates assembly of the body of the 30S subunit. With S5 and S12 plays an important role in translational accuracy. The chain is Small ribosomal subunit protein uS4A from Alkaliphilus metalliredigens (strain QYMF).